The following is a 337-amino-acid chain: Formamidase (337 aa).

In terms of domain architecture, CN hydrolase spans 14 to 257 (VVIGLVQLQL…DEIITAEVRP (244 aa)). Glutamate 60 acts as the Proton acceptor in catalysis. The active-site Proton donor is the lysine 129. Catalysis depends on cysteine 162, which acts as the Nucleophile.

The protein belongs to the carbon-nitrogen hydrolase superfamily. Aliphatic amidase family.

It carries out the reaction formamide + H2O = formate + NH4(+). Is an aliphatic amidase with a restricted substrate specificity, as it only hydrolyzes formamide. This Bradyrhizobium diazoefficiens (strain JCM 10833 / BCRC 13528 / IAM 13628 / NBRC 14792 / USDA 110) protein is Formamidase.